Reading from the N-terminus, the 315-residue chain is Neuroguidin (315 aa).

Ala2 is subject to N-acetylalanine. The stretch at 5-42 forms a coiled coil; that stretch reads EVLESDLPNAVALLKNLQEQVMAVTAQVQTLTKKVQAK. Residues 41 to 174 form a necessary for interaction with EIF4E region; sequence AKAYPTEKGL…KGTAKKYVPP (134 aa). 3 positions are modified to phosphoserine: Ser121, Ser142, and Ser143. The tract at residues 123-174 is disordered; it reads SENDPLRFKPHPSNMMSKLSSEDEEEDEAEEGQSGASGKKSGKGTAKKYVPP. Positions 144-153 are enriched in acidic residues; that stretch reads EDEEEDEAEE. A coiled-coil region spans residues 181 to 205; it reads YDETEAEREKKRLERAKRRALSSSV. Ser204 and Ser214 each carry phosphoserine. A disordered region spans residues 252-315; sequence SKREKGRRKR…RKKKGFRRRR (64 aa). Polar residues predominate over residues 264–276; that stretch reads VMSSQLHSLTHFS. The span at 295–315 shows a compositional bias: basic residues; that stretch reads TKKRKKIPKKGRKKKGFRRRR.

The protein belongs to the SAS10 family. In terms of assembly, part of the small subunit (SSU) processome, composed of more than 70 proteins and the RNA chaperone small nucleolar RNA (snoRNA) U3. Interacts with CPEB1 and EIF4E.

The protein localises to the nucleus. Its subcellular location is the nucleolus. The protein resides in the chromosome. It localises to the centromere. It is found in the cytoplasm. The protein localises to the cell projection. Its subcellular location is the axon. The protein resides in the dendrite. It localises to the filopodium. In terms of biological role, part of the small subunit (SSU) processome, first precursor of the small eukaryotic ribosomal subunit. During the assembly of the SSU processome in the nucleolus, many ribosome biogenesis factors, an RNA chaperone and ribosomal proteins associate with the nascent pre-rRNA and work in concert to generate RNA folding, modifications, rearrangements and cleavage as well as targeted degradation of pre-ribosomal RNA by the RNA exosome. Its dissociation from the complex determines the transition from state pre-A1 to state pre-A1*. Inhibits mRNA translation in a cytoplasmic polyadenylation element (CPE)-dependent manner. This is Neuroguidin (NGDN) from Bos taurus (Bovine).